A 502-amino-acid chain; its full sequence is Lipoprotein LipO (502 aa).

The first 21 residues, methionine 1 to glycine 21, serve as a signal peptide directing secretion. Cysteine 22 carries the N-palmitoyl cysteine lipid modification. Cysteine 22 carries the S-diacylglycerol cysteine lipid modification.

Its subcellular location is the cell membrane. This Bacillus subtilis (strain 168) protein is Lipoprotein LipO (lipO).